The sequence spans 81 residues: Photosystem I iron-sulfur center (81 aa).

4Fe-4S ferredoxin-type domains lie at 2–31 (SHSV…MVPW) and 39–68 (IASA…VRVY). The [4Fe-4S] cluster site is built by Cys11, Cys14, Cys17, Cys21, Cys48, Cys51, Cys54, and Cys58.

As to quaternary structure, the eukaryotic PSI reaction center is composed of at least 11 subunits. [4Fe-4S] cluster serves as cofactor.

It is found in the plastid. It localises to the chloroplast thylakoid membrane. It carries out the reaction reduced [plastocyanin] + hnu + oxidized [2Fe-2S]-[ferredoxin] = oxidized [plastocyanin] + reduced [2Fe-2S]-[ferredoxin]. In terms of biological role, apoprotein for the two 4Fe-4S centers FA and FB of photosystem I (PSI); essential for photochemical activity. FB is the terminal electron acceptor of PSI, donating electrons to ferredoxin. The C-terminus interacts with PsaA/B/D and helps assemble the protein into the PSI complex. Required for binding of PsaD and PsaE to PSI. PSI is a plastocyanin/cytochrome c6-ferredoxin oxidoreductase, converting photonic excitation into a charge separation, which transfers an electron from the donor P700 chlorophyll pair to the spectroscopically characterized acceptors A0, A1, FX, FA and FB in turn. The protein is Photosystem I iron-sulfur center of Nephroselmis olivacea (Green alga).